The sequence spans 21 residues: Cardiotoxin-like basic polypeptide ah (21 aa).

This sequence belongs to the three-finger toxin family. Short-chain subfamily. Orphan group XV sub-subfamily. Post-translationally, contains 4 disulfide bonds. As to expression, expressed by the venom gland.

It is found in the secreted. The protein resides in the target cell membrane. In terms of biological role, has hemolytic activity under low-lecithin conditions. Has low cytotoxic activity. Inhibits the expression of VEGF and bFGF in human non-small-cell lung cancer cell line NCI-H1299 in a dose-dependent manner. In Naja atra (Chinese cobra), this protein is Cardiotoxin-like basic polypeptide ah.